A 106-amino-acid chain; its full sequence is UPF0145 protein Daci_3728 (106 aa).

This sequence belongs to the UPF0145 family.

This is UPF0145 protein Daci_3728 from Delftia acidovorans (strain DSM 14801 / SPH-1).